The sequence spans 282 residues: MALKEYKPTSPARRHMTVADFAEITKAKPEKRLTKPVRKSGGRNAHGKVTTRHIGGGHKRRYRLIDWRRDKDGVPAKVAAIEYDPNRTARIALLHYLDGEKRYILAPVGVAVGDTLLSGADVDIRPGNALPVRTIPLGTVIHNVETAPGSGAKMIRTAGSFGQLMAKEGGYAQIRLPSGEVRKVLQDCKATIGQLGNVESSSVRVGKAGKSRWLGIRPTVRGLAMNPVDHPHGGGEGKSGQGNPHPVSPWGQKTKGLKTRNNRRTDKFIVTRRRPGVRNTQR.

Disordered stretches follow at residues 31 to 54 (KRLTKPVRKSGGRNAHGKVTTRHI) and 223 to 282 (LAMN…NTQR). 2 stretches are compositionally biased toward basic residues: residues 34–54 (TKPVRKSGGRNAHGKVTTRHI) and 270–282 (VTRRRPGVRNTQR).

It belongs to the universal ribosomal protein uL2 family. Part of the 50S ribosomal subunit. Forms a bridge to the 30S subunit in the 70S ribosome.

Its function is as follows. One of the primary rRNA binding proteins. Required for association of the 30S and 50S subunits to form the 70S ribosome, for tRNA binding and peptide bond formation. It has been suggested to have peptidyltransferase activity; this is somewhat controversial. Makes several contacts with the 16S rRNA in the 70S ribosome. This is Large ribosomal subunit protein uL2 from Anaeromyxobacter dehalogenans (strain 2CP-1 / ATCC BAA-258).